The chain runs to 365 residues: Probable 7-methylxanthine methyltransferase PCS2 (365 aa).

Position 19 (Y19) interacts with S-adenosyl-L-homocysteine. T26 lines the theobromine pocket. 5 residues coordinate S-adenosyl-L-homocysteine: C62, D99, L100, S134, and F135. 3 residues coordinate theobromine: Y152, H155, and W156. N173 is a Mg(2+) binding site. Theobromine is bound at residue R221. Residues D259, F261, and N262 each contribute to the Mg(2+) site.

Belongs to the methyltransferase superfamily. Type-7 methyltransferase family. The cofactor is Mg(2+).

The enzyme catalyses 7-methylxanthine + S-adenosyl-L-methionine = theobromine + S-adenosyl-L-homocysteine + H(+). Functionally, no detectable N-methyltransferase activity. This Camellia ptilophylla (Cocoa tea) protein is Probable 7-methylxanthine methyltransferase PCS2.